The sequence spans 202 residues: Pyrrolidone-carboxylate peptidase (202 aa).

Active-site residues include Glu78, Cys141, and His165.

It belongs to the peptidase C15 family. Homotetramer.

The protein resides in the cytoplasm. It catalyses the reaction Release of an N-terminal pyroglutamyl group from a polypeptide, the second amino acid generally not being Pro.. Removes 5-oxoproline from various penultimate amino acid residues except L-proline. This chain is Pyrrolidone-carboxylate peptidase, found in Thermosipho melanesiensis (strain DSM 12029 / CIP 104789 / BI429).